Reading from the N-terminus, the 90-residue chain is Protein LURE 1.4 (90 aa).

The N-terminal stretch at 1–19 (MKCPSIFLTLLIFVSSCTS) is a signal peptide. N-linked (GlcNAc...) asparagine glycosylation occurs at Asn-23. Intrachain disulfides connect Cys-58–Cys-75, Cys-61–Cys-82, and Cys-65–Cys-84. The PRK6 binding stretch occupies residues 67-87 (RRGKYIRTCSFERKLCRCSIS).

Belongs to the DEFL family. Binds to PRK6 LRRs. As to expression, expressed in the pistil. Detected exclusively in the synergid cells.

It localises to the secreted. Functionally, pollen tube attractants guiding pollen tubes to the ovular micropyle. The protein is Protein LURE 1.4 of Arabidopsis thaliana (Mouse-ear cress).